Reading from the N-terminus, the 170-residue chain is Urease accessory protein UreE (170 aa).

The segment at 134 to 170 is disordered; the sequence is ESGAYGGGHHHHGDDGHHPLAPIPLRQKIHRPSDKAE.

Belongs to the UreE family.

The protein resides in the cytoplasm. In terms of biological role, involved in urease metallocenter assembly. Binds nickel. Probably functions as a nickel donor during metallocenter assembly. The chain is Urease accessory protein UreE from Janthinobacterium sp. (strain Marseille) (Minibacterium massiliensis).